A 337-amino-acid chain; its full sequence is Tetraacyldisaccharide 4'-kinase (337 aa).

52 to 59 (TLGGAGKT) lines the ATP pocket.

This sequence belongs to the LpxK family.

It carries out the reaction a lipid A disaccharide + ATP = a lipid IVA + ADP + H(+). The protein operates within glycolipid biosynthesis; lipid IV(A) biosynthesis; lipid IV(A) from (3R)-3-hydroxytetradecanoyl-[acyl-carrier-protein] and UDP-N-acetyl-alpha-D-glucosamine: step 6/6. In terms of biological role, transfers the gamma-phosphate of ATP to the 4'-position of a tetraacyldisaccharide 1-phosphate intermediate (termed DS-1-P) to form tetraacyldisaccharide 1,4'-bis-phosphate (lipid IVA). This is Tetraacyldisaccharide 4'-kinase from Methylobacterium nodulans (strain LMG 21967 / CNCM I-2342 / ORS 2060).